Here is a 254-residue protein sequence, read N- to C-terminus: Nickel import ATP-binding protein NikD (254 aa).

The 240-residue stretch at 2 to 241 (PQQIELRNIA…PKHAVTRSLV (240 aa)) folds into the ABC transporter domain. 36–43 (GGSGSGKS) provides a ligand contact to ATP.

Belongs to the ABC transporter superfamily. Nickel importer (TC 3.A.1.5.3) family. As to quaternary structure, the complex is composed of two ATP-binding proteins (NikD and NikE), two transmembrane proteins (NikB and NikC) and a solute-binding protein (NikA).

Its subcellular location is the cell inner membrane. The catalysed reaction is Ni(2+)(out) + ATP + H2O = Ni(2+)(in) + ADP + phosphate + H(+). Functionally, part of the ABC transporter complex NikABCDE involved in nickel import. Responsible for energy coupling to the transport system. The protein is Nickel import ATP-binding protein NikD of Escherichia coli O157:H7.